A 508-amino-acid chain; its full sequence is Photosystem II CP47 reaction center protein (508 aa).

6 helical membrane-spanning segments follow: residues 21 to 36, 101 to 115, 140 to 156, 203 to 218, 237 to 252, and 457 to 472; these read SVHIMHTALVAGWAGS, IVFSGLCFLAAIWHW, GIHLFLAGVACFGFGAF, IAAGTLGILAGLFHLS, VLSSSIAAVFFAAFVV, and SFALLFFFGHIWHGAR.

It belongs to the PsbB/PsbC family. PsbB subfamily. In terms of assembly, PSII is composed of 1 copy each of membrane proteins PsbA, PsbB, PsbC, PsbD, PsbE, PsbF, PsbH, PsbI, PsbJ, PsbK, PsbL, PsbM, PsbT, PsbX, PsbY, PsbZ, Psb30/Ycf12, at least 3 peripheral proteins of the oxygen-evolving complex and a large number of cofactors. It forms dimeric complexes. Requires Binds multiple chlorophylls. PSII binds additional chlorophylls, carotenoids and specific lipids. as cofactor.

Its subcellular location is the plastid. The protein localises to the chloroplast thylakoid membrane. Its function is as follows. One of the components of the core complex of photosystem II (PSII). It binds chlorophyll and helps catalyze the primary light-induced photochemical processes of PSII. PSII is a light-driven water:plastoquinone oxidoreductase, using light energy to abstract electrons from H(2)O, generating O(2) and a proton gradient subsequently used for ATP formation. In Glycine max (Soybean), this protein is Photosystem II CP47 reaction center protein.